A 658-amino-acid chain; its full sequence is MSDDMSMGLPSSAGEHGVLRSMQEVAMSSQEASKMLRTYNIAWWGNNYYDVNELGHISVCPDPDVPEARVDLAQLVKTREAQGQRLPALFCFPQILQHRLRSINAAFKRARESYGYNGDYFLVYPIKVNQHRRVIESLIHSGEPLGLEAGSKAELMAVLAHAGMTRSVIVCNGYKDREYIRLALIGEKMGHKVYLVIEKMSEIAIVLDEAERLNVVPRLGVRARLASQGSGKWQSSGGEKSKFGLAATQVLQLVETLREAGRLDSLQLLHFHLGSQMANIRDIATGVRESARFYVELHKLGVNIQCFDVGGGLGVDYEGTRSQSDCSVNYGLNEYANNIIWAIGDACEENGLPHPTVITESGRAVTAHHTVLVSNIIGVERNEYTVPTAPAEDAPRALQSMWETWQEMHEPGTRRSLREWLHDSQMDLHDIHIGYSSGIFSLQERAWAEQLYLSMCHEVQKQLDPQNRAHRPIIDELQERMADKMYVNFSLFQSMPDAWGIDQLFPVLPLEGLDQVPERRAVLLDITCDSDGAIDHYIDGDGIATTMPMPEYDPENPPMLGFFMVGAYQEILGNMHNLFGDTEAVDVFVFPDGSVEVELSDEGDTVADMLQYVQLDPKTLLTQFRDQVKKTDLDAELQQQFLEEFEAGLYGYTYLEDE.

Lysine 127 is subject to N6-(pyridoxal phosphate)lysine. Residue 307–317 (FDVGGGLGVDY) coordinates substrate.

It belongs to the Orn/Lys/Arg decarboxylase class-II family. SpeA subfamily. As to quaternary structure, homotetramer. Pyridoxal 5'-phosphate is required as a cofactor. The cofactor is Mg(2+). Processed post-translationally to a 70 kDa mature form. In terms of processing, the N-terminus is blocked.

Its subcellular location is the periplasm. It carries out the reaction L-arginine + H(+) = agmatine + CO2. Its pathway is amine and polyamine biosynthesis; agmatine biosynthesis; agmatine from L-arginine: step 1/1. Down-regulated by polyamine end products putrescine and spermidine. Functionally, catalyzes the biosynthesis of agmatine from arginine. The protein is Biosynthetic arginine decarboxylase (speA) of Escherichia coli (strain K12).